Consider the following 607-residue polypeptide: Glutamine--fructose-6-phosphate aminotransferase [isomerizing] (607 aa).

The active-site Nucleophile; for GATase activity is C2. Positions 2-217 (CGIVGIVGHS…DGDWAVVRRD (216 aa)) constitute a Glutamine amidotransferase type-2 domain. SIS domains follow at residues 283–422 (LPFD…ARGV) and 455–597 (IARE…VDQP). The active-site For Fru-6P isomerization activity is the K602.

In terms of assembly, homodimer.

It localises to the cytoplasm. The enzyme catalyses D-fructose 6-phosphate + L-glutamine = D-glucosamine 6-phosphate + L-glutamate. In terms of biological role, catalyzes the first step in hexosamine metabolism, converting fructose-6P into glucosamine-6P using glutamine as a nitrogen source. The sequence is that of Glutamine--fructose-6-phosphate aminotransferase [isomerizing] from Mesorhizobium japonicum (strain LMG 29417 / CECT 9101 / MAFF 303099) (Mesorhizobium loti (strain MAFF 303099)).